Consider the following 489-residue polypeptide: MIKLFNTLSKKVEVFKPIDDVVKIYCCGVTVYDLCHLGHARSYIAWDVLRRFLIYSDFKVKYVQNFTDIDDKILKRAKEESSSMKEVSEKNIIEFHKDMDSLGIMRPDSMPRATNHICNICSFITILEDKGYAYSRDGDVYYSVFKNKNYGKLSNQNLQEQNINQQGRMVNEENSKKLNPQDFALWKKAKDDEPFFDSPWGKGRPGWHIECSAMVKDELGDTIDIHLGGSDLIFPHHENEIAQSEAANGKKLANYWLHNGMVNVNGQKMSKSLKNFKTIRELIKSGISPMTLRYFVMTVNYRKPLDFTEEALRSASEAWKNINVALSFMDLTKGAFISIDKNESIEEKYKEKISFELSQKKLKFSEALGNDLNTAGAIAIIYDLAKPLKNFLNQFQRVEGFTVELNEKFFLLENFKTLEKLTEVLGLKKEVLVKESKIKEEEISSLINERLKAKMEKNYAKADEIRNLLKEKGIELIDQSKEITTWIRV.

Cys-27 is a Zn(2+) binding site. Residues 29-39 (VTVYDLCHLGH) carry the 'HIGH' region motif. Positions 211, 236, and 240 each coordinate Zn(2+). Residues 268–272 (KMSKS) carry the 'KMSKS' region motif. Lys-271 is a binding site for ATP.

Belongs to the class-I aminoacyl-tRNA synthetase family. In terms of assembly, monomer. Requires Zn(2+) as cofactor.

It localises to the cytoplasm. The catalysed reaction is tRNA(Cys) + L-cysteine + ATP = L-cysteinyl-tRNA(Cys) + AMP + diphosphate. The protein is Cysteine--tRNA ligase of Prochlorococcus marinus (strain AS9601).